Consider the following 355-residue polypeptide: Erythronate-4-phosphate dehydrogenase (355 aa).

Residues S45 and T66 each contribute to the substrate site. D146 serves as a coordination point for NAD(+). The active site involves R206. D229 provides a ligand contact to NAD(+). The active site involves E234. The active-site Proton donor is H251. G254 is an NAD(+) binding site. Y255 contributes to the substrate binding site.

The protein belongs to the D-isomer specific 2-hydroxyacid dehydrogenase family. PdxB subfamily. Homodimer.

Its subcellular location is the cytoplasm. The catalysed reaction is 4-phospho-D-erythronate + NAD(+) = (R)-3-hydroxy-2-oxo-4-phosphooxybutanoate + NADH + H(+). It participates in cofactor biosynthesis; pyridoxine 5'-phosphate biosynthesis; pyridoxine 5'-phosphate from D-erythrose 4-phosphate: step 2/5. Catalyzes the oxidation of erythronate-4-phosphate to 3-hydroxy-2-oxo-4-phosphonooxybutanoate. The protein is Erythronate-4-phosphate dehydrogenase of Acinetobacter baumannii (strain AB307-0294).